Here is a 185-residue protein sequence, read N- to C-terminus: Elongation factor P (185 aa).

This sequence belongs to the elongation factor P family.

It is found in the cytoplasm. It functions in the pathway protein biosynthesis; polypeptide chain elongation. Its function is as follows. Involved in peptide bond synthesis. Stimulates efficient translation and peptide-bond synthesis on native or reconstituted 70S ribosomes in vitro. Probably functions indirectly by altering the affinity of the ribosome for aminoacyl-tRNA, thus increasing their reactivity as acceptors for peptidyl transferase. In Bordetella avium (strain 197N), this protein is Elongation factor P.